Here is a 195-residue protein sequence, read N- to C-terminus: Protein GrpE (195 aa).

This sequence belongs to the GrpE family. As to quaternary structure, homodimer.

It is found in the cytoplasm. Its function is as follows. Participates actively in the response to hyperosmotic and heat shock by preventing the aggregation of stress-denatured proteins, in association with DnaK and GrpE. It is the nucleotide exchange factor for DnaK and may function as a thermosensor. Unfolded proteins bind initially to DnaJ; upon interaction with the DnaJ-bound protein, DnaK hydrolyzes its bound ATP, resulting in the formation of a stable complex. GrpE releases ADP from DnaK; ATP binding to DnaK triggers the release of the substrate protein, thus completing the reaction cycle. Several rounds of ATP-dependent interactions between DnaJ, DnaK and GrpE are required for fully efficient folding. The chain is Protein GrpE from Francisella tularensis subsp. novicida (strain U112).